The sequence spans 124 residues: Holo-[acyl-carrier-protein] synthase (124 aa).

The Mg(2+) site is built by Asp8 and Glu58.

Belongs to the P-Pant transferase superfamily. AcpS family. The cofactor is Mg(2+).

Its subcellular location is the cytoplasm. The catalysed reaction is apo-[ACP] + CoA = holo-[ACP] + adenosine 3',5'-bisphosphate + H(+). Functionally, transfers the 4'-phosphopantetheine moiety from coenzyme A to a Ser of acyl-carrier-protein. The protein is Holo-[acyl-carrier-protein] synthase of Lacticaseibacillus casei (strain BL23) (Lactobacillus casei).